The following is a 614-amino-acid chain: Laccase 1 (614 aa).

Positions methionine 1–alanine 21 are cleaved as a signal peptide. Plastocyanin-like domains are found at residues isoleucine 30 to lysine 143 and tyrosine 172 to proline 360. Residue asparagine 75 is glycosylated (N-linked (GlcNAc...) asparagine). Cu cation is bound by residues histidine 79, histidine 81, histidine 123, and histidine 125. N-linked (GlcNAc...) asparagine glycans are attached at residues asparagine 257, asparagine 280, asparagine 445, asparagine 469, and asparagine 485. The 131-residue stretch at asparagine 469 to glycine 599 folds into the Plastocyanin-like 3 domain. Residues histidine 507, histidine 510, and histidine 512 each coordinate Cu cation. An N-linked (GlcNAc...) asparagine glycan is attached at asparagine 527. Residues histidine 581, cysteine 582, histidine 583, and histidine 587 each contribute to the Cu cation site.

The protein belongs to the multicopper oxidase family. Cu cation is required as a cofactor.

The protein localises to the cell surface. It participates in pigment biosynthesis. Functionally, laccase; part of the Pks1 gene cluster that mediates the biosynthesis of an anthraquinone derivative pigment that contributes to conidial pigmentation that provides protection from UV radiation, heat and cold stress. The polyketide synthase Pks1 produces 1-acetyl-2,4,6,8-tetrahydroxy-9,10-anthraquinone though condensation of acetyl-CoA with malonyl-CoA. The dehydratase EthD and the laccase Mlac1 further convert the anthraquinone derivative into the final conidial pigment. In Metarhizium majus (strain ARSEF 297), this protein is Laccase 1.